We begin with the raw amino-acid sequence, 291 residues long: Elongation factor Ts (291 aa).

Residues 81 to 84 (TDFV) form an involved in Mg(2+) ion dislocation from EF-Tu region. A disordered region spans residues 271–291 (EGKEKKDESFADEVMAQVRDS).

It belongs to the EF-Ts family.

The protein resides in the cytoplasm. Associates with the EF-Tu.GDP complex and induces the exchange of GDP to GTP. It remains bound to the aminoacyl-tRNA.EF-Tu.GTP complex up to the GTP hydrolysis stage on the ribosome. In Halorhodospira halophila (strain DSM 244 / SL1) (Ectothiorhodospira halophila (strain DSM 244 / SL1)), this protein is Elongation factor Ts.